Reading from the N-terminus, the 271-residue chain is 4-hydroxy-tetrahydrodipicolinate reductase (271 aa).

NAD(+)-binding positions include 10-15 (GAGGRM), glutamate 36, 100-102 (GTT), and 124-127 (SGNM). The Proton donor/acceptor role is filled by histidine 157. (S)-2,3,4,5-tetrahydrodipicolinate is bound at residue histidine 158. Residue lysine 161 is the Proton donor of the active site. Residue 167-168 (GT) coordinates (S)-2,3,4,5-tetrahydrodipicolinate.

It belongs to the DapB family.

The protein resides in the cytoplasm. The enzyme catalyses (S)-2,3,4,5-tetrahydrodipicolinate + NAD(+) + H2O = (2S,4S)-4-hydroxy-2,3,4,5-tetrahydrodipicolinate + NADH + H(+). The catalysed reaction is (S)-2,3,4,5-tetrahydrodipicolinate + NADP(+) + H2O = (2S,4S)-4-hydroxy-2,3,4,5-tetrahydrodipicolinate + NADPH + H(+). Its pathway is amino-acid biosynthesis; L-lysine biosynthesis via DAP pathway; (S)-tetrahydrodipicolinate from L-aspartate: step 4/4. Its function is as follows. Catalyzes the conversion of 4-hydroxy-tetrahydrodipicolinate (HTPA) to tetrahydrodipicolinate. This is 4-hydroxy-tetrahydrodipicolinate reductase from Rhodopseudomonas palustris (strain BisB18).